Reading from the N-terminus, the 274-residue chain is Diaminopimelate epimerase (274 aa).

Residues Asn11, Gln44, and Asn64 each coordinate substrate. Cys73 (proton donor) is an active-site residue. Substrate-binding positions include 74-75 (GN), Asn157, Asn190, and 208-209 (ER). The Proton acceptor role is filled by Cys217. Residue 218–219 (GS) coordinates substrate.

The protein belongs to the diaminopimelate epimerase family. In terms of assembly, homodimer.

It is found in the cytoplasm. The enzyme catalyses (2S,6S)-2,6-diaminopimelate = meso-2,6-diaminopimelate. The protein operates within amino-acid biosynthesis; L-lysine biosynthesis via DAP pathway; DL-2,6-diaminopimelate from LL-2,6-diaminopimelate: step 1/1. Catalyzes the stereoinversion of LL-2,6-diaminopimelate (L,L-DAP) to meso-diaminopimelate (meso-DAP), a precursor of L-lysine and an essential component of the bacterial peptidoglycan. The sequence is that of Diaminopimelate epimerase from Glaesserella parasuis serovar 5 (strain SH0165) (Haemophilus parasuis).